A 118-amino-acid polypeptide reads, in one-letter code: Basic phospholipase A2 3 (118 aa).

Cystine bridges form between Cys-11–Cys-71, Cys-27–Cys-117, Cys-29–Cys-45, Cys-44–Cys-98, Cys-51–Cys-91, Cys-60–Cys-84, and Cys-78–Cys-89. Ca(2+)-binding residues include Tyr-28, Gly-30, and Gly-32. The active site involves His-48. Ca(2+) is bound at residue Asp-49. Asp-92 is an active-site residue.

It belongs to the phospholipase A2 family. Group I subfamily. D49 sub-subfamily. Monomer. Requires Ca(2+) as cofactor. In terms of tissue distribution, expressed by the venom gland.

Its subcellular location is the secreted. The enzyme catalyses a 1,2-diacyl-sn-glycero-3-phosphocholine + H2O = a 1-acyl-sn-glycero-3-phosphocholine + a fatty acid + H(+). Functionally, PLA2 catalyzes the calcium-dependent hydrolysis of the 2-acyl groups in 3-sn-phosphoglycerides. In Laticauda semifasciata (Black-banded sea krait), this protein is Basic phospholipase A2 3.